The primary structure comprises 141 residues: Molybdopterin synthase catalytic subunit 2 (141 aa).

Substrate is bound by residues 37–39 (MIR), 103–104 (HR), lysine 119, and 126–128 (KHQ).

It belongs to the MoaE family. In terms of assembly, heterotetramer of 2 MoaD subunits and 2 MoaE subunits. Also stable as homodimer. The enzyme changes between these two forms during catalysis.

It catalyses the reaction 2 [molybdopterin-synthase sulfur-carrier protein]-C-terminal-Gly-aminoethanethioate + cyclic pyranopterin phosphate + H2O = molybdopterin + 2 [molybdopterin-synthase sulfur-carrier protein]-C-terminal Gly-Gly + 2 H(+). It participates in cofactor biosynthesis; molybdopterin biosynthesis. Converts molybdopterin precursor Z into molybdopterin. This requires the incorporation of two sulfur atoms into precursor Z to generate a dithiolene group. The sulfur is provided by MoaD. The polypeptide is Molybdopterin synthase catalytic subunit 2 (moaE2) (Mycobacterium tuberculosis (strain CDC 1551 / Oshkosh)).